A 359-amino-acid polypeptide reads, in one-letter code: Membrane-bound lytic murein transglycosylase C (359 aa).

The N-terminal stretch at 1–16 (MKKYLALALIAPLLIS) is a signal peptide. The N-palmitoyl cysteine moiety is linked to residue C17. A lipid anchor (S-diacylglycerol cysteine) is attached at C17.

It belongs to the transglycosylase Slt family.

It localises to the cell outer membrane. It carries out the reaction Exolytic cleavage of the (1-&gt;4)-beta-glycosidic linkage between N-acetylmuramic acid (MurNAc) and N-acetylglucosamine (GlcNAc) residues in peptidoglycan, from either the reducing or the non-reducing ends of the peptidoglycan chains, with concomitant formation of a 1,6-anhydrobond in the MurNAc residue.. Its function is as follows. Murein-degrading enzyme. May play a role in recycling of muropeptides during cell elongation and/or cell division. The protein is Membrane-bound lytic murein transglycosylase C of Escherichia coli O8 (strain IAI1).